The sequence spans 224 residues: Inhibitor of apoptosis protein (224 aa).

Residues 29-92 (VDARNKSFAI…GFWSRNCGFM (64 aa)) form a BIR repeat. Zn(2+)-binding residues include cysteine 62, cysteine 65, histidine 82, and cysteine 89. The C4-type zinc-finger motif lies at 189-207 (CMTCGIEQINKDENFCSAC).

This sequence belongs to the asfivirus IAP family. Interacts with subunit p17 of host CASP3.

It localises to the host cytoplasm. The protein resides in the virion. Functionally, prevents apoptosis of host cell by inhibiting caspase-3/CASP3 activation to promote the viral replication. Also induces the activation of host NF-kappaB. The chain is Inhibitor of apoptosis protein from Ornithodoros (relapsing fever ticks).